We begin with the raw amino-acid sequence, 601 residues long: Elongation factor 4 (601 aa).

One can recognise a tr-type G domain in the interval 6-188; that stretch reads KFTRNFSIIA…AICYLLPPPV (183 aa). GTP-binding positions include 18–23 and 135–138; these read DHGKST and NKID.

This sequence belongs to the TRAFAC class translation factor GTPase superfamily. Classic translation factor GTPase family. LepA subfamily.

The protein resides in the cell inner membrane. The enzyme catalyses GTP + H2O = GDP + phosphate + H(+). In terms of biological role, required for accurate and efficient protein synthesis under certain stress conditions. May act as a fidelity factor of the translation reaction, by catalyzing a one-codon backward translocation of tRNAs on improperly translocated ribosomes. Back-translocation proceeds from a post-translocation (POST) complex to a pre-translocation (PRE) complex, thus giving elongation factor G a second chance to translocate the tRNAs correctly. Binds to ribosomes in a GTP-dependent manner. The sequence is that of Elongation factor 4 from Leptospira biflexa serovar Patoc (strain Patoc 1 / Ames).